We begin with the raw amino-acid sequence, 579 residues long: Protein inscuteable homolog (579 aa).

The tract at residues 74-89 (SVQRWMEDLKLMTECE) is important for interaction with GPSM2. The PDZ-binding signature appears at 576–579 (ESFV).

Interacts with ALS2CR19/PAR3B and GPSM1/AGS3. Interacts with F2RL2/PAR3. Interacts with GPSM2/LGN (via TPR repeat region). In terms of tissue distribution, expressed in brain, kidney, liver, testis and skin.

It is found in the cytoplasm. The protein localises to the cell cortex. In terms of biological role, may function as an adapter linking the Par3 complex to the GPSM1/GPSM2 complex. Involved in spindle orientation during mitosis. May regulate cell proliferation and differentiation in the developing nervous system. May play a role in the asymmetric division of fibroblasts and participate in the process of stratification of the squamous epithelium. This is Protein inscuteable homolog (Insc) from Mus musculus (Mouse).